The chain runs to 429 residues: Carboxypeptidase B (429 aa).

The N-terminal stretch at 1 to 15 is a signal peptide; the sequence is MKFLLVLALCAVVYA. The Peptidase M14 domain maps to 121–423; it reads NYQELEVIDE…EGIVVGARRA (303 aa). Zn(2+) contacts are provided by histidine 182 and glutamate 185. Residues 182-185, arginine 236, and 256-257 each bind substrate; these read HARE and NR. Residues cysteine 250 and cysteine 273 are joined by a disulfide bond. Position 309 (histidine 309) interacts with Zn(2+). Substrate contacts are provided by residues 310-311 and tyrosine 365; that span reads SF. The active-site Proton donor/acceptor is the glutamate 387.

Belongs to the peptidase M14 family. It depends on Zn(2+) as a cofactor.

The protein resides in the secreted. It carries out the reaction Preferential release of a C-terminal lysine or arginine amino acid.. Its activity is regulated as follows. Highly resistant to inhibition by potato carboxypeptidase inhibitor (PCI). Moderately inhibited by leech carboxypeptidase inhibitor (LCI) and tick carboxypeptidase inhibitor (TCI). Its function is as follows. Metalloprotease which cleaves a single amino acid from the C-terminal end of polypeptide chains. Shows a strong preference for peptides with a terminal lysine residue. In Helicoverpa zea (Corn earworm moth), this protein is Carboxypeptidase B.